The primary structure comprises 303 residues: tRNA dimethylallyltransferase 1 (303 aa).

An ATP-binding site is contributed by 17 to 24 (GPTACGKT). A substrate-binding site is contributed by 19–24 (TACGKT). The interaction with substrate tRNA stretch occupies residues 42–45 (DSRQ).

It belongs to the IPP transferase family. In terms of assembly, monomer. It depends on Mg(2+) as a cofactor.

The enzyme catalyses adenosine(37) in tRNA + dimethylallyl diphosphate = N(6)-dimethylallyladenosine(37) in tRNA + diphosphate. Its function is as follows. Catalyzes the transfer of a dimethylallyl group onto the adenine at position 37 in tRNAs that read codons beginning with uridine, leading to the formation of N6-(dimethylallyl)adenosine (i(6)A). This chain is tRNA dimethylallyltransferase 1, found in Hahella chejuensis (strain KCTC 2396).